A 185-amino-acid polypeptide reads, in one-letter code: Capsid protein (185 aa).

Residues 136 to 185 are disordered; it reads NAPILSTLPETTVVRRRDRGRSPRRRTPSPRRRRSPSPRRRRSQSRESQC. Residues 149-178 are compositionally biased toward basic residues; it reads VRRRDRGRSPRRRTPSPRRRRSPSPRRRRS. Residues Ser157, Ser164, and Ser172 each carry the phosphoserine; by host modification. A 1; half-length repeat occupies 157–163; it reads SPRRRTP. The 3 X 8 AA repeats of S-P-R-R-R-[PR]-S-Q stretch occupies residues 157-179; that stretch reads SPRRRTPSPRRRRSPSPRRRRSQ. Positions 160-177 match the Bipartite nuclear localization signal motif; it reads RRTPSPRRRRSPSPRRRR. Tandem repeats lie at residues 164–171 and 172–179. An RNA binding region spans residues 179 to 185; that stretch reads QSRESQC.

This sequence belongs to the orthohepadnavirus core antigen family. In terms of assembly, homodimerizes, then multimerizes. Interacts with cytosol exposed regions of viral L glycoprotein present in the reticulum-to-Golgi compartment. Interacts with human FLNB. Phosphorylated form interacts with host importin alpha; this interaction depends on the exposure of the NLS, which itself depends upon genome maturation and/or phosphorylation of the capsid protein. Interacts with host NUP153. In terms of processing, phosphorylated by host SRPK1, SRPK2, and maybe protein kinase C or GAPDH. Phosphorylation is critical for pregenomic RNA packaging. Protein kinase C phosphorylation is stimulated by HBx protein and may play a role in transport of the viral genome to the nucleus at the late step during the viral replication cycle.

The protein localises to the virion. It localises to the host cytoplasm. Its function is as follows. Self assembles to form an icosahedral capsid. Most capsids appear to be large particles with an icosahedral symmetry of T=4 and consist of 240 copies of capsid protein, though a fraction forms smaller T=3 particles consisting of 180 capsid proteins. Entering capsids are transported along microtubules to the nucleus. Phosphorylation of the capsid is thought to induce exposure of nuclear localization signal in the C-terminal portion of the capsid protein that allows binding to the nuclear pore complex via the importin (karyopherin-) alpha and beta. Capsids are imported in intact form through the nuclear pore into the nuclear basket, where it probably binds NUP153. Only capsids that contain the mature viral genome can release the viral DNA and capsid protein into the nucleoplasm. Immature capsids get stuck in the basket. Capsids encapsulate the pre-genomic RNA and the P protein. Pre-genomic RNA is reverse-transcribed into DNA while the capsid is still in the cytoplasm. The capsid can then either be directed to the nucleus, providing more genomes for transcription, or bud through the endoplasmic reticulum to provide new virions. The chain is Capsid protein from Hepatitis B virus genotype A2 subtype adw2 (strain Rutter 1979) (HBV-A).